A 768-amino-acid chain; its full sequence is Ribosomal RNA large subunit methyltransferase K/L (768 aa).

In terms of domain architecture, THUMP spans aspartate 60–leucine 175.

Belongs to the methyltransferase superfamily. RlmKL family.

Its subcellular location is the cytoplasm. The enzyme catalyses guanosine(2445) in 23S rRNA + S-adenosyl-L-methionine = N(2)-methylguanosine(2445) in 23S rRNA + S-adenosyl-L-homocysteine + H(+). It carries out the reaction guanosine(2069) in 23S rRNA + S-adenosyl-L-methionine = N(2)-methylguanosine(2069) in 23S rRNA + S-adenosyl-L-homocysteine + H(+). Its function is as follows. Specifically methylates the guanine in position 2445 (m2G2445) and the guanine in position 2069 (m7G2069) of 23S rRNA. The sequence is that of Ribosomal RNA large subunit methyltransferase K/L from Psychrobacter arcticus (strain DSM 17307 / VKM B-2377 / 273-4).